We begin with the raw amino-acid sequence, 69 residues long: Cytochrome c oxidase subunit 8A, mitochondrial (69 aa).

A mitochondrion-targeting transit peptide spans 1–25 (MYVVTPLLLRGLTGSARRLPVPRAQ). An SIFI-degron motif is present at residues 2–19 (YVVTPLLLRGLTGSARRL). Topologically, residues 26–36 (VHSMPPEQKLG) are mitochondrial matrix. The helical transmembrane segment at 37 to 60 (VLELAIGFTSCMVTFLLPAGWIMS) threads the bilayer. Topologically, residues 61-69 (HLESYKKRG) are mitochondrial intermembrane.

The protein belongs to the cytochrome c oxidase VIII family. As to quaternary structure, component of the cytochrome c oxidase (complex IV, CIV), a multisubunit enzyme composed of 14 subunits. The complex is composed of a catalytic core of 3 subunits MT-CO1, MT-CO2 and MT-CO3, encoded in the mitochondrial DNA, and 11 supernumerary subunits COX4I, COX5A, COX5B, COX6A, COX6B, COX6C, COX7A, COX7B, COX7C, COX8 and NDUFA4, which are encoded in the nuclear genome. The complex exists as a monomer or a dimer and forms supercomplexes (SCs) in the inner mitochondrial membrane with NADH-ubiquinone oxidoreductase (complex I, CI) and ubiquinol-cytochrome c oxidoreductase (cytochrome b-c1 complex, complex III, CIII), resulting in different assemblies (supercomplex SCI(1)III(2)IV(1) and megacomplex MCI(2)III(2)IV(2)). In terms of processing, in response to mitochondrial stress, the precursor protein is ubiquitinated by the SIFI complex in the cytoplasm before mitochondrial import, leading to its degradation. Within the SIFI complex, UBR4 initiates ubiquitin chain that are further elongated or branched by KCMF1.

Its subcellular location is the mitochondrion inner membrane. The protein operates within energy metabolism; oxidative phosphorylation. Functionally, component of the cytochrome c oxidase, the last enzyme in the mitochondrial electron transport chain which drives oxidative phosphorylation. The respiratory chain contains 3 multisubunit complexes succinate dehydrogenase (complex II, CII), ubiquinol-cytochrome c oxidoreductase (cytochrome b-c1 complex, complex III, CIII) and cytochrome c oxidase (complex IV, CIV), that cooperate to transfer electrons derived from NADH and succinate to molecular oxygen, creating an electrochemical gradient over the inner membrane that drives transmembrane transport and the ATP synthase. Cytochrome c oxidase is the component of the respiratory chain that catalyzes the reduction of oxygen to water. Electrons originating from reduced cytochrome c in the intermembrane space (IMS) are transferred via the dinuclear copper A center (CU(A)) of subunit 2 and heme A of subunit 1 to the active site in subunit 1, a binuclear center (BNC) formed by heme A3 and copper B (CU(B)). The BNC reduces molecular oxygen to 2 water molecules using 4 electrons from cytochrome c in the IMS and 4 protons from the mitochondrial matrix. This is Cytochrome c oxidase subunit 8A, mitochondrial (COX8A) from Ateles belzebuth (White-bellied spider monkey).